A 223-amino-acid chain; its full sequence is Thymine-DNA glycosylase (223 aa).

4 residues coordinate [4Fe-4S] cluster: cysteine 201, cysteine 208, cysteine 211, and cysteine 217.

The protein belongs to the Nth/MutY family. [4Fe-4S] cluster serves as cofactor.

The catalysed reaction is Hydrolyzes mismatched double-stranded DNA and polynucleotides, releasing free thymine.. Thymine cleavage is completely inhibited by Ni(2+), Co(2+), Zn(2+), Cu(2+) and Mn(2+). Activity is not affected by Mg(2+) and Ca(2+). Functionally, DNA glycosylase that excises thymine from T/G mismatches. Also has a weak DNA glycosylase activity on uracil paired with various bases. This Aeropyrum pernix (strain ATCC 700893 / DSM 11879 / JCM 9820 / NBRC 100138 / K1) protein is Thymine-DNA glycosylase.